Here is a 308-residue protein sequence, read N- to C-terminus: Probable GTP 3',8-cyclase (308 aa).

Residues 4 to 224 enclose the Radical SAM core domain; it reads RFGRPLEDLR…QIRKKHFRPR (221 aa). Arg13 lines the GTP pocket. Residues Cys20, Cys24, and Cys27 each contribute to the [4Fe-4S] cluster site. Lys60 provides a ligand contact to GTP. An S-adenosyl-L-methionine-binding site is contributed by Gly64. Thr90 is a GTP binding site. Ser114 serves as a coordination point for S-adenosyl-L-methionine. Lys151 lines the GTP pocket. 2 residues coordinate [4Fe-4S] cluster: Cys245 and Cys248. GTP is bound at residue 250-252; sequence RIR. Cys262 is a binding site for [4Fe-4S] cluster.

This sequence belongs to the radical SAM superfamily. MoaA family. Requires [4Fe-4S] cluster as cofactor.

It catalyses the reaction GTP + AH2 + S-adenosyl-L-methionine = (8S)-3',8-cyclo-7,8-dihydroguanosine 5'-triphosphate + 5'-deoxyadenosine + L-methionine + A + H(+). Its pathway is cofactor biosynthesis; molybdopterin biosynthesis. Its function is as follows. Catalyzes the cyclization of GTP to (8S)-3',8-cyclo-7,8-dihydroguanosine 5'-triphosphate. The sequence is that of Probable GTP 3',8-cyclase from Saccharolobus islandicus (strain L.S.2.15 / Lassen #1) (Sulfolobus islandicus).